A 149-amino-acid polypeptide reads, in one-letter code: NADH-quinone oxidoreductase subunit A (149 aa).

3 helical membrane-spanning segments follow: residues 16-36 (FAVF…GAFF), 68-88 (FYLV…LYAW), and 98-118 (LGFI…FYLV).

Belongs to the complex I subunit 3 family. As to quaternary structure, NDH-1 is composed of 13 different subunits. Subunits NuoA, H, J, K, L, M, N constitute the membrane sector of the complex.

It localises to the cell inner membrane. The catalysed reaction is a quinone + NADH + 5 H(+)(in) = a quinol + NAD(+) + 4 H(+)(out). In terms of biological role, NDH-1 shuttles electrons from NADH, via FMN and iron-sulfur (Fe-S) centers, to quinones in the respiratory chain. The immediate electron acceptor for the enzyme in this species is believed to be ubiquinone. Couples the redox reaction to proton translocation (for every two electrons transferred, four hydrogen ions are translocated across the cytoplasmic membrane), and thus conserves the redox energy in a proton gradient. The chain is NADH-quinone oxidoreductase subunit A from Photorhabdus laumondii subsp. laumondii (strain DSM 15139 / CIP 105565 / TT01) (Photorhabdus luminescens subsp. laumondii).